The sequence spans 121 residues: Large ribosomal subunit protein bL12 (121 aa).

It belongs to the bacterial ribosomal protein bL12 family. Homodimer. Part of the ribosomal stalk of the 50S ribosomal subunit. Forms a multimeric L10(L12)X complex, where L10 forms an elongated spine to which 2 to 4 L12 dimers bind in a sequential fashion. Binds GTP-bound translation factors.

Its function is as follows. Forms part of the ribosomal stalk which helps the ribosome interact with GTP-bound translation factors. Is thus essential for accurate translation. This Pseudomonas fluorescens (strain ATCC BAA-477 / NRRL B-23932 / Pf-5) protein is Large ribosomal subunit protein bL12.